A 616-amino-acid polypeptide reads, in one-letter code: Chaperone protein HscA (616 aa).

Belongs to the heat shock protein 70 family.

Its function is as follows. Chaperone involved in the maturation of iron-sulfur cluster-containing proteins. Has a low intrinsic ATPase activity which is markedly stimulated by HscB. Involved in the maturation of IscU. In Edwardsiella ictaluri (strain 93-146), this protein is Chaperone protein HscA.